A 316-amino-acid polypeptide reads, in one-letter code: Ribosomal RNA small subunit methyltransferase H (316 aa).

S-adenosyl-L-methionine contacts are provided by residues 35 to 37 (AGH), Asp55, Phe84, Asp105, and Gln112.

It belongs to the methyltransferase superfamily. RsmH family.

The protein resides in the cytoplasm. It carries out the reaction cytidine(1402) in 16S rRNA + S-adenosyl-L-methionine = N(4)-methylcytidine(1402) in 16S rRNA + S-adenosyl-L-homocysteine + H(+). Specifically methylates the N4 position of cytidine in position 1402 (C1402) of 16S rRNA. The polypeptide is Ribosomal RNA small subunit methyltransferase H (Streptococcus sanguinis (strain SK36)).